A 107-amino-acid chain; its full sequence is Inner membrane protein YgbE (107 aa).

The Cytoplasmic segment spans residues 1–20 (MRNSHNITLTNNDSLTEDEE). The chain crosses the membrane as a helical span at residues 21-43 (TTWSLPGAVVGFISWLFALAMPM). Residues 44–52 (LIYGSNTLF) are Periplasmic-facing. A helical membrane pass occupies residues 53–75 (FFIYTWPFFLALMPVAVVVGIAL). Residues 76–86 (HSLMDGKLRYS) are Cytoplasmic-facing. Residues 87-106 (IVFTLVTVGIMFGALFMWLL) traverse the membrane as a helical segment. A topological domain (periplasmic) is located at residue G107.

Its subcellular location is the cell inner membrane. The chain is Inner membrane protein YgbE (ygbE) from Escherichia coli (strain K12).